Here is a 335-residue protein sequence, read N- to C-terminus: Anthranilate phosphoribosyltransferase (335 aa).

5-phospho-alpha-D-ribose 1-diphosphate-binding positions include glycine 79, 82–83 (GD), serine 87, 89–92 (NIST), 107–115 (KHGNRSITS), and serine 119. Glycine 79 is a binding site for anthranilate. Residue serine 91 participates in Mg(2+) binding. Asparagine 110 provides a ligand contact to anthranilate. Arginine 165 provides a ligand contact to anthranilate. Residues aspartate 224 and glutamate 225 each contribute to the Mg(2+) site.

Belongs to the anthranilate phosphoribosyltransferase family. As to quaternary structure, homodimer. The cofactor is Mg(2+).

The enzyme catalyses N-(5-phospho-beta-D-ribosyl)anthranilate + diphosphate = 5-phospho-alpha-D-ribose 1-diphosphate + anthranilate. It functions in the pathway amino-acid biosynthesis; L-tryptophan biosynthesis; L-tryptophan from chorismate: step 2/5. In terms of biological role, catalyzes the transfer of the phosphoribosyl group of 5-phosphorylribose-1-pyrophosphate (PRPP) to anthranilate to yield N-(5'-phosphoribosyl)-anthranilate (PRA). This is Anthranilate phosphoribosyltransferase from Lactococcus lactis subsp. cremoris (strain MG1363).